The primary structure comprises 466 residues: Glycine--tRNA ligase (466 aa).

Arg104 and Glu178 together coordinate substrate. Residues 210–212, 220–225, 294–295, and 338–341 each bind ATP; these read RNE, FRTREF, EL, and GADR. 225–229 is a substrate binding site; it reads FEQME. 334-338 lines the substrate pocket; sequence EPSLG.

The protein belongs to the class-II aminoacyl-tRNA synthetase family. In terms of assembly, homodimer.

Its subcellular location is the cytoplasm. It carries out the reaction tRNA(Gly) + glycine + ATP = glycyl-tRNA(Gly) + AMP + diphosphate. Catalyzes the attachment of glycine to tRNA(Gly). This chain is Glycine--tRNA ligase, found in Geobacillus thermodenitrificans (strain NG80-2).